Consider the following 53-residue polypeptide: Conotoxin Cal9.2f (53 aa).

Residues 1 to 6 (KKGVTL) constitute a propeptide that is removed on maturation. Disulfide bonds link Cys-15-Cys-32, Cys-20-Cys-42, and Cys-22-Cys-47.

As to expression, expressed by the venom duct.

Its subcellular location is the secreted. In terms of biological role, probable neurotoxin with unknown target. Possibly targets ion channels. This Californiconus californicus (California cone) protein is Conotoxin Cal9.2f.